We begin with the raw amino-acid sequence, 454 residues long: Chromosomal replication initiator protein DnaA (454 aa).

The segment at 1 to 83 (MMTDSMRLVW…RPLKVLLEVA (83 aa)) is domain I, interacts with DnaA modulators. The segment at 83 to 115 (AECVAEAPETPEEAPQQLCLPAFADIPRPSSGR) is domain II. Residues 116–333 (LLNRDFTFDS…SGIKGLAARN (218 aa)) form a domain III, AAA+ region region. Positions 160, 162, 163, and 164 each coordinate ATP. Residues 334-454 (SIMGRGIDLK…LCGKIEAGEF (121 aa)) form a domain IV, binds dsDNA region.

Belongs to the DnaA family. As to quaternary structure, oligomerizes as a right-handed, spiral filament on DNA at oriC.

Its subcellular location is the cytoplasm. In terms of biological role, plays an essential role in the initiation and regulation of chromosomal replication. ATP-DnaA binds to the origin of replication (oriC) to initiate formation of the DNA replication initiation complex once per cell cycle. Binds the DnaA box (a 9 base pair repeat at the origin) and separates the double-stranded (ds)DNA. Forms a right-handed helical filament on oriC DNA; dsDNA binds to the exterior of the filament while single-stranded (ss)DNA is stabiized in the filament's interior. The ATP-DnaA-oriC complex binds and stabilizes one strand of the AT-rich DNA unwinding element (DUE), permitting loading of DNA polymerase. After initiation quickly degrades to an ADP-DnaA complex that is not apt for DNA replication. Binds acidic phospholipids. This Desulfatibacillum aliphaticivorans protein is Chromosomal replication initiator protein DnaA.